The chain runs to 114 residues: UPF0342 protein LCA_0622 (114 aa).

This sequence belongs to the UPF0342 family.

This is UPF0342 protein LCA_0622 from Latilactobacillus sakei subsp. sakei (strain 23K) (Lactobacillus sakei subsp. sakei).